A 289-amino-acid chain; its full sequence is ATP phosphoribosyltransferase (289 aa).

Belongs to the ATP phosphoribosyltransferase family. Long subfamily. The cofactor is Mg(2+).

It localises to the cytoplasm. The catalysed reaction is 1-(5-phospho-beta-D-ribosyl)-ATP + diphosphate = 5-phospho-alpha-D-ribose 1-diphosphate + ATP. It functions in the pathway amino-acid biosynthesis; L-histidine biosynthesis; L-histidine from 5-phospho-alpha-D-ribose 1-diphosphate: step 1/9. Its activity is regulated as follows. Feedback inhibited by histidine. Its function is as follows. Catalyzes the condensation of ATP and 5-phosphoribose 1-diphosphate to form N'-(5'-phosphoribosyl)-ATP (PR-ATP). Has a crucial role in the pathway because the rate of histidine biosynthesis seems to be controlled primarily by regulation of HisG enzymatic activity. This is ATP phosphoribosyltransferase from Desulforudis audaxviator (strain MP104C).